Reading from the N-terminus, the 218-residue chain is Small ribosomal subunit protein uS3 (218 aa).

One can recognise a KH type-2 domain in the interval 38-106 (IREYISKRLQ…RVHINIVEIK (69 aa)).

It belongs to the universal ribosomal protein uS3 family. In terms of assembly, part of the 30S ribosomal subunit. Forms a tight complex with proteins S10 and S14.

In terms of biological role, binds the lower part of the 30S subunit head. Binds mRNA in the 70S ribosome, positioning it for translation. The protein is Small ribosomal subunit protein uS3 of Geobacillus kaustophilus (strain HTA426).